We begin with the raw amino-acid sequence, 310 residues long: p-hydroxybenzoic acid efflux pump subunit AaeA (310 aa).

The chain crosses the membrane as a helical span at residues 12 to 32 (AITVALVILAFIAISRAWVFY).

This sequence belongs to the membrane fusion protein (MFP) (TC 8.A.1) family.

The protein localises to the cell inner membrane. In terms of biological role, forms an efflux pump with AaeB. The polypeptide is p-hydroxybenzoic acid efflux pump subunit AaeA (Enterobacter sp. (strain 638)).